A 131-amino-acid polypeptide reads, in one-letter code: Phosphoribosyl-AMP cyclohydrolase (131 aa).

Position 74 (D74) interacts with Mg(2+). Residue C75 participates in Zn(2+) binding. 2 residues coordinate Mg(2+): D76 and D78. Zn(2+) contacts are provided by C91 and C98.

Belongs to the PRA-CH family. Homodimer. The cofactor is Mg(2+). It depends on Zn(2+) as a cofactor.

It localises to the cytoplasm. It catalyses the reaction 1-(5-phospho-beta-D-ribosyl)-5'-AMP + H2O = 1-(5-phospho-beta-D-ribosyl)-5-[(5-phospho-beta-D-ribosylamino)methylideneamino]imidazole-4-carboxamide. The protein operates within amino-acid biosynthesis; L-histidine biosynthesis; L-histidine from 5-phospho-alpha-D-ribose 1-diphosphate: step 3/9. In terms of biological role, catalyzes the hydrolysis of the adenine ring of phosphoribosyl-AMP. The sequence is that of Phosphoribosyl-AMP cyclohydrolase from Bradyrhizobium sp. (strain BTAi1 / ATCC BAA-1182).